Here is a 376-residue protein sequence, read N- to C-terminus: MVKFSIEKKTILGRLGKIDSWGPVDVNHATPSCMTYLRAGHIPHLTWDVAENQLKLSQTPIYQMTLPSLISNAKIIEKFGKGVAKFVGMGALESPAIHLSPFDPLGKLPSGYNDSKSIAIWTANGKVSLDVKTYRNTVNSFGCGSFETLVDYDLPRDAGHKKLLKAVDRTTTFNEQIFKQDEKIDGERIVALGGGFSKYHRRKCAVDIGLAENTAAYTVEFHEFVEGMETDEMEMKELLEETFSPLPPTKLRCISGPFNPKTVLFLVQQGIDLFDSSFAIKLAEEGHAFCLADDYPTSSKYEVVDFKDQEKFADDFTPVFDGCGCYTCTKYTKGYLQHLLNTKELLASILLVIHNMSEYDRMFKLIRKSLENSEGL.

Cys323, Cys325, Cys328, and His354 together coordinate Zn(2+).

Belongs to the queuine tRNA-ribosyltransferase family. QTRT2 subfamily. In terms of assembly, heterodimer of a catalytic subunit and an accessory subunit. Zn(2+) is required as a cofactor.

The protein localises to the cytoplasm. Its function is as follows. Non-catalytic subunit of the queuine tRNA-ribosyltransferase (TGT) that catalyzes the base-exchange of a guanine (G) residue with queuine (Q) at position 34 (anticodon wobble position) in tRNAs with GU(N) anticodons (tRNA-Asp, -Asn, -His and -Tyr), resulting in the hypermodified nucleoside queuosine (7-(((4,5-cis-dihydroxy-2-cyclopenten-1-yl)amino)methyl)-7-deazaguanosine). This chain is Queuine tRNA-ribosyltransferase accessory subunit 2, found in Caenorhabditis briggsae.